Here is a 470-residue protein sequence, read N- to C-terminus: Ribulose bisphosphate carboxylase large chain (470 aa).

Substrate-binding residues include Asn115 and Thr165. Residue Lys167 is the Proton acceptor of the active site. Lys169 contributes to the substrate binding site. Residues Lys193, Asp195, and Glu196 each contribute to the Mg(2+) site. The residue at position 193 (Lys193) is an N6-carboxylysine. His286 functions as the Proton acceptor in the catalytic mechanism. Positions 287, 319, and 371 each coordinate substrate.

Belongs to the RuBisCO large chain family. Type I subfamily. Heterohexadecamer of 8 large chains and 8 small chains. It depends on Mg(2+) as a cofactor.

It is found in the carboxysome. It carries out the reaction 2 (2R)-3-phosphoglycerate + 2 H(+) = D-ribulose 1,5-bisphosphate + CO2 + H2O. It catalyses the reaction D-ribulose 1,5-bisphosphate + O2 = 2-phosphoglycolate + (2R)-3-phosphoglycerate + 2 H(+). Functionally, ruBisCO catalyzes two reactions: the carboxylation of D-ribulose 1,5-bisphosphate, the primary event in carbon dioxide fixation, as well as the oxidative fragmentation of the pentose substrate in the photorespiration process. Both reactions occur simultaneously and in competition at the same active site. In Prochlorococcus marinus (strain MIT 9303), this protein is Ribulose bisphosphate carboxylase large chain.